The primary structure comprises 112 residues: Class I hydrophobin 7 (112 aa).

A signal peptide spans 1–23; that stretch reads MFARQATSVSAFLVLTLSLFAAA. 4 cysteine pairs are disulfide-bonded: C36–C93, C43–C87, C44–C74, and C94–C107. A glycan (N-linked (GlcNAc...) asparagine) is linked at N96.

The protein belongs to the fungal hydrophobin family. In terms of assembly, self-assembles to form functional amyloid fibrils called rodlets. Self-assembly into fibrillar rodlets occurs spontaneously at hydrophobic:hydrophilic interfaces and the rodlets further associate laterally to form amphipathic monolayers.

It localises to the secreted. The protein localises to the cell wall. Aerial growth, conidiation, and dispersal of filamentous fungi in the environment rely upon a capability of their secreting small amphipathic proteins called hydrophobins (HPBs) with low sequence identity. Class I can self-assemble into an outermost layer of rodlet bundles on aerial cell surfaces, conferring cellular hydrophobicity that supports fungal growth, development and dispersal; whereas Class II form highly ordered films at water-air interfaces through intermolecular interactions but contribute nothing to the rodlet structure. The chain is Class I hydrophobin 7 from Flammulina velutipes (Agaricus velutipes).